The sequence spans 550 residues: (S)-beta-bisabolene synthase (550 aa).

Residues Asp303, Asp307, Ser451, and Glu455 each coordinate Mg(2+). The short motif at Asp303–Asp307 is the DDXXD motif element.

This sequence belongs to the terpene synthase family. Tpsa subfamily. Mg(2+) serves as cofactor. It depends on Mn(2+) as a cofactor. Expressed only in young rhizomes. Not detected in leaves, roots and mature rhizomes.

It carries out the reaction (2E,6E)-farnesyl diphosphate = (S)-beta-bisabolene + diphosphate. Sesquiterpene synthase involved in the biosynthesis of bisabolene. The chain is (S)-beta-bisabolene synthase (TPS1) from Zingiber officinale (Ginger).